We begin with the raw amino-acid sequence, 164 residues long: S-ribosylhomocysteine lyase (164 aa).

Residues His-54, His-58, and Cys-128 each contribute to the Fe cation site.

Belongs to the LuxS family. As to quaternary structure, homodimer. Requires Fe cation as cofactor.

It carries out the reaction S-(5-deoxy-D-ribos-5-yl)-L-homocysteine = (S)-4,5-dihydroxypentane-2,3-dione + L-homocysteine. Its function is as follows. Involved in the synthesis of autoinducer 2 (AI-2) which is secreted by bacteria and is used to communicate both the cell density and the metabolic potential of the environment. The regulation of gene expression in response to changes in cell density is called quorum sensing. Catalyzes the transformation of S-ribosylhomocysteine (RHC) to homocysteine (HC) and 4,5-dihydroxy-2,3-pentadione (DPD). The polypeptide is S-ribosylhomocysteine lyase (Campylobacter hominis (strain ATCC BAA-381 / DSM 21671 / CCUG 45161 / LMG 19568 / NCTC 13146 / CH001A)).